The following is a 164-amino-acid chain: MTRSKSAPETTRAARQARIVAILSSAQVRSQSELAALLADEGIEVTQATLSRDLEELGAVKLRGADGGVGVYMVPEDGSPVRGVSGGTARLSRLLSELLVSADASANLAVLRTPPGAADYLASAIDRAALPYVVGTIAGDDTVFVAARDPMTGAELADTLEKLT.

Belongs to the ArgR family.

It localises to the cytoplasm. The protein operates within amino-acid biosynthesis; L-arginine biosynthesis [regulation]. Functionally, regulates arginine biosynthesis genes. The protein is Arginine repressor of Mycobacterium avium (strain 104).